We begin with the raw amino-acid sequence, 185 residues long: Elongation factor P (185 aa).

The protein belongs to the elongation factor P family.

The protein localises to the cytoplasm. It participates in protein biosynthesis; polypeptide chain elongation. In terms of biological role, involved in peptide bond synthesis. Stimulates efficient translation and peptide-bond synthesis on native or reconstituted 70S ribosomes in vitro. Probably functions indirectly by altering the affinity of the ribosome for aminoacyl-tRNA, thus increasing their reactivity as acceptors for peptidyl transferase. In Deinococcus geothermalis (strain DSM 11300 / CIP 105573 / AG-3a), this protein is Elongation factor P.